The following is a 594-amino-acid chain: Elongation factor 4 (594 aa).

The tr-type G domain maps to 2–184 (KNIRNFSIIA…TIVAKVPAPE (183 aa)). Residues 14–19 (DHGKST) and 131–134 (NKID) contribute to the GTP site.

It belongs to the TRAFAC class translation factor GTPase superfamily. Classic translation factor GTPase family. LepA subfamily.

The protein localises to the cell inner membrane. The catalysed reaction is GTP + H2O = GDP + phosphate + H(+). Functionally, required for accurate and efficient protein synthesis under certain stress conditions. May act as a fidelity factor of the translation reaction, by catalyzing a one-codon backward translocation of tRNAs on improperly translocated ribosomes. Back-translocation proceeds from a post-translocation (POST) complex to a pre-translocation (PRE) complex, thus giving elongation factor G a second chance to translocate the tRNAs correctly. Binds to ribosomes in a GTP-dependent manner. This is Elongation factor 4 from Francisella tularensis subsp. holarctica (strain FTNF002-00 / FTA).